Consider the following 221-residue polypeptide: Glutathione peroxidase 6 (221 aa).

The signal sequence occupies residues 1–19 (MAQKLWGSCLFSLFMAALA). The active site involves Cys73.

It belongs to the glutathione peroxidase family.

The protein resides in the secreted. It carries out the reaction 2 glutathione + H2O2 = glutathione disulfide + 2 H2O. This is Glutathione peroxidase 6 (Gpx6) from Mus musculus (Mouse).